The chain runs to 494 residues: Integrin beta-like protein 1 (494 aa).

The signal sequence occupies residues 1–23 (MHPPGFKNFLLLVSSLFFIGLSA). Disulfide bonds link Cys40/Cys71, Cys51/Cys69, Cys63/Cys74, Cys76/Cys89, Cys91/Cys112, Cys96/Cys110, Cys104/Cys115, Cys117/Cys126, Cys132/Cys159, Cys143/Cys157, Cys151/Cys162, Cys164/Cys178, Cys180/Cys202, Cys185/Cys200, Cys194/Cys205, Cys207/Cys216, Cys220/Cys247, Cys231/Cys245, Cys239/Cys250, Cys252/Cys269, Cys271/Cys296, Cys276/Cys294, Cys288/Cys299, Cys301/Cys310, Cys316/Cys343, Cys327/Cys341, Cys335/Cys346, Cys348/Cys361, Cys363/Cys384, Cys368/Cys382, Cys376/Cys387, Cys389/Cys398, Cys404/Cys431, Cys415/Cys429, Cys423/Cys434, Cys436/Cys448, Cys450/Cys471, Cys455/Cys469, Cys463/Cys474, and Cys476/Cys485. 10 consecutive I-EGF domains span residues 40–90 (CRLS…PLCE), 91–127 (CHDWVCETYDGKTCAGHGTCDCGKCKCDVGWSGEACQ), 132–179 (CDLT…KFCE), 180–217 (CDDRECIDDETEEICGGHGKCYCGNCYCEAGWHGDKCE), 220–270 (CDIT…DTCE), 271–311 (CDER…KKCE), 316–362 (CPLS…KTCE), 363–399 (CDDRRCEDLDGVVCGGRGTCSCGRCVCEKGWFGKLCQ), 404–449 (CNMT…EFCD), and 450–486 (CDDRDCDKHDGLICTGNGICSCGNCECWDGWNGNACE). The I repeat unit spans residues 51–95 (CRAPGQPPGSALCHDRGRCECGVCICHVTEPGTYFGPLCECHDWV). The tract at residues 51–494 (CRAPGQPPGS…CEIWLGTEYP (444 aa)) is cysteine-rich tandem repeats. The II repeat unit spans residues 96–142 (CETYDGKTCAGHGTCDCGKCKCDVGWSGEACQYPTKCDLTKKISNQM). An III repeat occupies 143–184 (CKNSQDVICSNAGTCHCGRCKCDNSDGHGLIYGKFCECDDRE). Residues 185–230 (CIDDETEEICGGHGKCYCGNCYCEAGWHGDKCEFQCDITPWESKRR) form an IV repeat. The V repeat unit spans residues 231 to 275 (CTSPDGKVCSNRGTCVCGECSCHDVDPTGDWGDIHGDTCECDERD). One copy of the VI repeat lies at 276–326 (CRAVYDRYSDDFCSGHGQCNCGRCDCRAGWYGKKCEHPKNCPLSAEESTRK). Residues 327 to 367 (CQGSSDLPCSGRGRCECGRCTCYPPGDSRVYGKTCECDDRR) form a VII repeat. The stretch at 368 to 414 (CEDLDGVVCGGRGTCSCGRCVCEKGWFGKLCQHPRKCNMTEEQSRSL) is one VIII repeat. The N-linked (GlcNAc...) asparagine glycan is linked to Asn405. An IX repeat occupies 415-454 (CESADGTLCSGKGSCHCGKCICSGEEWYISGEFCDCDDRD). The X repeat unit spans residues 455-494 (CDKHDGLICTGNGICSCGNCECWDGWNGNACEIWLGTEYP).

The protein localises to the secreted. The sequence is that of Integrin beta-like protein 1 (Itgbl1) from Rattus norvegicus (Rat).